Reading from the N-terminus, the 204-residue chain is Holliday junction branch migration complex subunit RuvA (204 aa).

Residues 1–64 (MIGKLKGTID…EDQLKLFGFM (64 aa)) are domain I. Residues 65–143 (TALEREWFNL…AFAGEAINIA (79 aa)) form a domain II region. Residues 144 to 151 (LKQELGEG) form a flexible linker region. The segment at 152–204 (VAAAPVADAVSALTNLGYSRDQAANAVAAAMKTAGDDADSAKLIRLGLKELAR) is domain III.

It belongs to the RuvA family. Homotetramer. Forms an RuvA(8)-RuvB(12)-Holliday junction (HJ) complex. HJ DNA is sandwiched between 2 RuvA tetramers; dsDNA enters through RuvA and exits via RuvB. An RuvB hexamer assembles on each DNA strand where it exits the tetramer. Each RuvB hexamer is contacted by two RuvA subunits (via domain III) on 2 adjacent RuvB subunits; this complex drives branch migration. In the full resolvosome a probable DNA-RuvA(4)-RuvB(12)-RuvC(2) complex forms which resolves the HJ.

It localises to the cytoplasm. The RuvA-RuvB-RuvC complex processes Holliday junction (HJ) DNA during genetic recombination and DNA repair, while the RuvA-RuvB complex plays an important role in the rescue of blocked DNA replication forks via replication fork reversal (RFR). RuvA specifically binds to HJ cruciform DNA, conferring on it an open structure. The RuvB hexamer acts as an ATP-dependent pump, pulling dsDNA into and through the RuvAB complex. HJ branch migration allows RuvC to scan DNA until it finds its consensus sequence, where it cleaves and resolves the cruciform DNA. The chain is Holliday junction branch migration complex subunit RuvA from Rhizobium leguminosarum bv. trifolii (strain WSM2304).